We begin with the raw amino-acid sequence, 610 residues long: MIFTSTPPAPPPADAQQRQPRYPGEDTTPTSRREIWGWYTYGIAAEVFAVCGVGSFLPLTLEQLARERGTLLSSHLPCVGPGSPSAAPGNGTTPAMLRRDGLGSDQCVVGLFGLQINTASFAMYTFSLAVLVQALTLISFSALADYEKNRKTLLLTFGLIGSVSSMLFVFISPRLYILGAILVVIGVTCLGSSFVVLNSFLPVLVANDPSIQTARKTEGEELPHLDSSGEYTRSGSFNRGDNRGFDDYVAPEHGLKPKTTDSTSPEMQLSTKISSKGVGLGYCAAVLVQVLSILLLFTLSKTSLPKISGTLPLRFVLLLVGIWWFSFTVVTRRWLRNRPGPPLDTSKGGARWRIWLRLVGFAWKSLWKTVKVAAKLREVVIFLIAWFLLSDAMATVSGTAILFARTELKMSTTAVGLLSITATLSGMTGAFLWPVVSRRLKLKSNHTIMLCIALFEIIPLYGMLAYIPLVKKWGVIGLQQPWEIFPLGIVHGLVSGGLSSYCRSFFGVLIPPGSEAAFYALYAATDKGSSFIGPAVVGVLIDATGQVRSGFFFIAVLIVLPIPLIWMVNAEKGRQEGLAMAEMLEKSHGENSSEFGHPSEEAEGLLARNP.

The tract at residues 1 to 29 (MIFTSTPPAPPPADAQQRQPRYPGEDTTP) is disordered. Residues 41-61 (YGIAAEVFAVCGVGSFLPLTL) form a helical membrane-spanning segment. The N-linked (GlcNAc...) asparagine glycan is linked to asparagine 90. 3 consecutive transmembrane segments (helical) span residues 120-140 (SFAM…LISF), 153-173 (LLLT…FISP), and 177-197 (ILGA…FVVL). Positions 216 to 242 (KTEGEELPHLDSSGEYTRSGSFNRGDN) are disordered. A compositionally biased stretch (polar residues) spans 229–239 (GEYTRSGSFNR). 4 helical membrane passes run 277 to 297 (GVGL…LLLF), 310 to 330 (TLPL…FTVV), 379 to 399 (VVIF…VSGT), and 415 to 435 (VGLL…LWPV). N-linked (GlcNAc...) asparagine glycosylation is present at asparagine 445. Transmembrane regions (helical) follow at residues 450 to 470 (LCIA…IPLV), 485 to 507 (FPLG…SFFG), 527 to 547 (KGSS…TGQV), and 550 to 570 (GFFF…MVNA). The segment at 586–610 (KSHGENSSEFGHPSEEAEGLLARNP) is disordered. An N-linked (GlcNAc...) asparagine glycan is attached at asparagine 591.

Belongs to the ATG22 family.

The protein resides in the vacuole membrane. In terms of biological role, vacuolar effluxer which mediate the efflux of amino acids resulting from autophagic degradation. The release of autophagic amino acids allows the maintenance of protein synthesis and viability during nitrogen starvation. This chain is Autophagy-related protein 22-1 (atg22-1), found in Aspergillus clavatus (strain ATCC 1007 / CBS 513.65 / DSM 816 / NCTC 3887 / NRRL 1 / QM 1276 / 107).